A 562-amino-acid chain; its full sequence is Arginine--tRNA ligase (562 aa).

Residues 121–131 (PNIAKPFSVGH) carry the 'HIGH' region motif.

This sequence belongs to the class-I aminoacyl-tRNA synthetase family. Monomer.

The protein localises to the cytoplasm. The catalysed reaction is tRNA(Arg) + L-arginine + ATP = L-arginyl-tRNA(Arg) + AMP + diphosphate. The protein is Arginine--tRNA ligase of Streptococcus uberis (strain ATCC BAA-854 / 0140J).